The primary structure comprises 259 residues: Imidazole glycerol phosphate synthase subunit HisF (259 aa).

Active-site residues include D11 and D130.

Belongs to the HisA/HisF family. Heterodimer of HisH and HisF.

Its subcellular location is the cytoplasm. It catalyses the reaction 5-[(5-phospho-1-deoxy-D-ribulos-1-ylimino)methylamino]-1-(5-phospho-beta-D-ribosyl)imidazole-4-carboxamide + L-glutamine = D-erythro-1-(imidazol-4-yl)glycerol 3-phosphate + 5-amino-1-(5-phospho-beta-D-ribosyl)imidazole-4-carboxamide + L-glutamate + H(+). It functions in the pathway amino-acid biosynthesis; L-histidine biosynthesis; L-histidine from 5-phospho-alpha-D-ribose 1-diphosphate: step 5/9. Functionally, IGPS catalyzes the conversion of PRFAR and glutamine to IGP, AICAR and glutamate. The HisF subunit catalyzes the cyclization activity that produces IGP and AICAR from PRFAR using the ammonia provided by the HisH subunit. The polypeptide is Imidazole glycerol phosphate synthase subunit HisF (Chloroflexus aurantiacus (strain ATCC 29366 / DSM 635 / J-10-fl)).